The chain runs to 401 residues: (1R,4R,5S)-(-)-guaia-6,10(14)-diene synthase (401 aa).

A disordered region spans residues 1–21; the sequence is MVKFDSGSESEMTNGDDLHIN. Positions 134 and 139 each coordinate Mg(2+). The DDXXD motif motif lies at 134 to 138; sequence DDQFD. A substrate-binding site is contributed by R242. The Mg(2+) site is built by N288 and S292. K295 provides a ligand contact to substrate. D296 contributes to the Mg(2+) binding site. Substrate is bound at residue 375-376; it reads RY.

This sequence belongs to the terpene synthase family. It depends on Mg(2+) as a cofactor.

It catalyses the reaction (2E,6E)-farnesyl diphosphate = (1R,4R,5S)-(-)-guaia-6,10(14)-diene + diphosphate. It participates in secondary metabolite biosynthesis; terpenoid biosynthesis. Its function is as follows. Catalyzes the conversion of (2E,6E)-farnesyl diphosphate (FPP) to yield the bicyclic sesquiterpene guaia-6,10(14)-diene via a 1,10-cyclization, which requires the abstraction of the pyrophosphate from FPP to yield the (E,E)-germacradienyl cation. The only accepted substrate is farnesyl diphosphate (FPP). This Fusarium proliferatum (strain ET1) (Orchid endophyte fungus) protein is (1R,4R,5S)-(-)-guaia-6,10(14)-diene synthase.